The following is a 427-amino-acid chain: U1 small nuclear ribonucleoprotein 70 kDa (427 aa).

Disordered stretches follow at residues 82–102 (EPGDPEYAPPKPEVELPSQKR) and 215–427 (RGRT…EYVR). The segment covering 93 to 102 (PEVELPSQKR) has biased composition (basic and acidic residues). An RRM domain is found at 138-216 (KTLFVSRLNY…RRVLVDVERG (79 aa)). The span at 227–241 (LGGGLGTSRVGGGEE) shows a compositional bias: gly residues. Basic and acidic residues-rich tracts occupy residues 257 to 402 (EPSR…RYDK) and 409 to 427 (RYEREYKRSKRSESREYVR). Ser-282 carries the post-translational modification Phosphoserine.

In terms of assembly, component of the spliceosome. Interacts with CYP63, U2AF35A, U2AF35B, SRZ21, RSZ22, SR34, SR45, SR45A and SCL33. In terms of processing, phosphorylated. The association and dissociation with SR45 is not affected by the phosphorylation status. In terms of tissue distribution, ubiquitous.

It is found in the nucleus speckle. The protein localises to the nucleus. Its subcellular location is the nucleoplasm. Mediates the splicing of pre-mRNA by binding to the loop I region of U1-snRNA. In Arabidopsis thaliana (Mouse-ear cress), this protein is U1 small nuclear ribonucleoprotein 70 kDa (RNU1).